A 505-amino-acid polypeptide reads, in one-letter code: Protein amnionless (505 aa).

Positions 1 to 20 are cleaved as a signal peptide; sequence MGLHWQWLIWALVGLHVALA. Residues 21 to 344 are Extracellular-facing; it reads TKWYGGGMDF…RPYNPNVSFS (324 aa). A helical transmembrane segment spans residues 345 to 365; the sequence is SIVLILFCMALVGLVSVVILA. Topologically, residues 366 to 505 are cytoplasmic; the sequence is HFMPENPYLN…CEADTDEETI (140 aa). Residues 451–482 are disordered; the sequence is GALEEAAKESQEQDEILSVPKMETGDLDARSV. Basic and acidic residues predominate over residues 473 to 482; sequence ETGDLDARSV.

In terms of tissue distribution, specifically expressed in nephrocytes.

It localises to the cell membrane. In terms of biological role, required in the nephrocyte for normal uptake of proteins and elimination of toxins, and for maintenance of endocytic trafficking structures. May function together with Cubn. The sequence is that of Protein amnionless from Drosophila melanogaster (Fruit fly).